A 450-amino-acid chain; its full sequence is Cytidylate cyclase (450 aa).

The region spanning 97-236 (VTMFVDIRKS…LPVDMTAKLQ (140 aa)) is the Guanylate cyclase domain. A ribonucleoside 5'-triphosphate is bound at residue phenylalanine 100. Residues aspartate 102, isoleucine 103, and aspartate 146 each coordinate Mn(2+). An AGS-C domain region spans residues 318–450 (PNQFNFECFV…YRNIIGVYIK (133 aa)).

This sequence belongs to the adenylyl cyclase class-4/guanylyl cyclase family. Pyrimidine cyclase subfamily. In terms of assembly, homodimer. It depends on Mn(2+) as a cofactor.

The protein localises to the cytoplasm. The enzyme catalyses CTP = 3',5'-cyclic CMP + diphosphate. Its activity is regulated as follows. In E.coli strain MG1655 transformed with both genes cCMP appears between 15 and 30 minutes after infection with phage T5 (at protein level). No cCMP accumulates in uninfected cells. Functionally, pycsar (pyrimidine cyclase system for antiphage resistance) provides immunity against bacteriophage. The pyrimidine cyclase (PycC) synthesizes cyclic nucleotides in response to infection; these serve as specific second messenger signals. The signal activates the adjacent effector, leading to bacterial cell death and abortive phage infection. A clade E Pycsar system. The pyrimidine cyclase gene of a two-gene Pycsar system, generates cyclic CMP (cCMP) from CTP in response to bacteriophage infection. Has little to no activity on ATP, GTP or UTP. Expression of this and adjacent effector EcPycTM (AC P0DV25) confers resistance to bacteriophage P1 and T5; expression of this gene alone does not confer resistance. When cells expressing the Pycsar system are infected by phage T5 at low multiplicity of infection (0.2 MOI) the culture survives, at 2.0 MOI bacteria enter growth arrest. The same cells enter growth arrest after exposure to 250 uM cCMP but not cUMP; thus the effector protein responds only to the cNMP produced by its cognate NTP cyclase. Some of the cells treated with cCMP have abnormal membrane protrusions. This chain is Cytidylate cyclase, found in Escherichia coli.